Consider the following 281-residue polypeptide: Pantothenate synthetase (281 aa).

Residue 31–38 (MGNLHAGH) participates in ATP binding. The Proton donor role is filled by histidine 38. Glutamine 62 provides a ligand contact to (R)-pantoate. Residue glutamine 62 coordinates beta-alanine. ATP is bound at residue 150-153 (GKKD). Residue glutamine 156 coordinates (R)-pantoate. ATP is bound by residues valine 179 and 187–190 (MSSR).

The protein belongs to the pantothenate synthetase family. As to quaternary structure, homodimer.

Its subcellular location is the cytoplasm. It carries out the reaction (R)-pantoate + beta-alanine + ATP = (R)-pantothenate + AMP + diphosphate + H(+). The protein operates within cofactor biosynthesis; (R)-pantothenate biosynthesis; (R)-pantothenate from (R)-pantoate and beta-alanine: step 1/1. Its function is as follows. Catalyzes the condensation of pantoate with beta-alanine in an ATP-dependent reaction via a pantoyl-adenylate intermediate. The protein is Pantothenate synthetase of Xylella fastidiosa (strain M12).